A 158-amino-acid chain; its full sequence is NAD(P)H-quinone oxidoreductase subunit J, chloroplastic (158 aa).

The protein belongs to the complex I 30 kDa subunit family. In terms of assembly, NDH is composed of at least 16 different subunits, 5 of which are encoded in the nucleus.

Its subcellular location is the plastid. It localises to the chloroplast thylakoid membrane. It carries out the reaction a plastoquinone + NADH + (n+1) H(+)(in) = a plastoquinol + NAD(+) + n H(+)(out). The catalysed reaction is a plastoquinone + NADPH + (n+1) H(+)(in) = a plastoquinol + NADP(+) + n H(+)(out). Its function is as follows. NDH shuttles electrons from NAD(P)H:plastoquinone, via FMN and iron-sulfur (Fe-S) centers, to quinones in the photosynthetic chain and possibly in a chloroplast respiratory chain. The immediate electron acceptor for the enzyme in this species is believed to be plastoquinone. Couples the redox reaction to proton translocation, and thus conserves the redox energy in a proton gradient. This chain is NAD(P)H-quinone oxidoreductase subunit J, chloroplastic, found in Illicium oligandrum (Star anise).